Reading from the N-terminus, the 212-residue chain is Nitric oxide synthase (212 aa).

Tyr-11 lines the heme b pocket. The calmodulin-binding stretch occupies residues Lys-30–Met-50. The Flavodoxin-like domain occupies Ala-60 to Gly-212. The disordered stretch occupies residues Ser-155 to Ser-175. The segment covering Asp-158–Phe-173 has biased composition (basic and acidic residues). Ala-186–Gly-212 is a binding site for FMN.

This sequence belongs to the NOS family. Heme b is required as a cofactor. The cofactor is FAD. FMN serves as cofactor.

It catalyses the reaction 2 L-arginine + 3 NADPH + 4 O2 + H(+) = 2 L-citrulline + 2 nitric oxide + 3 NADP(+) + 4 H2O. Produces nitric oxide (NO) which is a messenger molecule with diverse functions throughout the body. This chain is Nitric oxide synthase, found in Squalus acanthias (Spiny dogfish).